The following is a 68-amino-acid chain: RICYIAPYDHKTCAAGENICYLKAWCDAWCSSRGKKLEFGCAATCPTVKPGVDISCCDTDNCNPHPKL.

5 disulfides stabilise this stretch: Cys-3–Cys-20, Cys-13–Cys-41, Cys-26–Cys-30, Cys-45–Cys-56, and Cys-57–Cys-62.

Belongs to the three-finger toxin family. Long-chain subfamily. Type II alpha-neurotoxin sub-subfamily. Expressed by the venom gland.

It is found in the secreted. Its function is as follows. Binds with high affinity to muscular (alpha-1/CHRNA1) and neuronal (alpha-7/CHRNA7) nicotinic acetylcholine receptor (nAChR) and inhibits acetylcholine from binding to the receptor, thereby impairing neuromuscular and neuronal transmission. The sequence is that of Long neurotoxin 1 from Aspidelaps scutatus (Shield-nose snake).